We begin with the raw amino-acid sequence, 357 residues long: Membrane-bound lytic murein transglycosylase C (357 aa).

The N-terminal stretch at 1–15 is a signal peptide; sequence MKKYLLLALLPFLYA. Residue cysteine 16 is the site of N-palmitoyl cysteine attachment. Residue cysteine 16 is the site of S-diacylglycerol cysteine attachment.

This sequence belongs to the transglycosylase Slt family.

The protein localises to the cell outer membrane. The enzyme catalyses Exolytic cleavage of the (1-&gt;4)-beta-glycosidic linkage between N-acetylmuramic acid (MurNAc) and N-acetylglucosamine (GlcNAc) residues in peptidoglycan, from either the reducing or the non-reducing ends of the peptidoglycan chains, with concomitant formation of a 1,6-anhydrobond in the MurNAc residue.. In terms of biological role, murein-degrading enzyme. May play a role in recycling of muropeptides during cell elongation and/or cell division. This is Membrane-bound lytic murein transglycosylase C from Haemophilus influenzae (strain PittEE).